The chain runs to 270 residues: Putative pyruvate, phosphate dikinase regulatory protein 2 (270 aa).

151–158 (GVSRTSKT) contributes to the ADP binding site.

This sequence belongs to the pyruvate, phosphate/water dikinase regulatory protein family. PDRP subfamily.

It carries out the reaction N(tele)-phospho-L-histidyl/L-threonyl-[pyruvate, phosphate dikinase] + ADP = N(tele)-phospho-L-histidyl/O-phospho-L-threonyl-[pyruvate, phosphate dikinase] + AMP + H(+). The enzyme catalyses N(tele)-phospho-L-histidyl/O-phospho-L-threonyl-[pyruvate, phosphate dikinase] + phosphate + H(+) = N(tele)-phospho-L-histidyl/L-threonyl-[pyruvate, phosphate dikinase] + diphosphate. Bifunctional serine/threonine kinase and phosphorylase involved in the regulation of the pyruvate, phosphate dikinase (PPDK) by catalyzing its phosphorylation/dephosphorylation. This Listeria welshimeri serovar 6b (strain ATCC 35897 / DSM 20650 / CCUG 15529 / CIP 8149 / NCTC 11857 / SLCC 5334 / V8) protein is Putative pyruvate, phosphate dikinase regulatory protein 2.